Reading from the N-terminus, the 1829-residue chain is Protein TIC 214 (1829 aa).

6 helical membrane-spanning segments follow: residues 18–38 (IINS…FSIG), 67–87 (FIAG…HLAL), 90–110 (PHTI…WNNP), 127–147 (LSIQ…HFLL), 174–194 (FVGW…VLVW), and 224–244 (IFSI…PSPI). Residues 260 to 272 (RDVEIEKTFERGG) are compositionally biased toward basic and acidic residues. The tract at residues 260-301 (RDVEIEKTFERGGTKQGQEVSAEEDPSPSLFSEEKEDPDKIE) is disordered.

It belongs to the TIC214 family. Part of the Tic complex.

The protein localises to the plastid. The protein resides in the chloroplast inner membrane. In terms of biological role, involved in protein precursor import into chloroplasts. May be part of an intermediate translocation complex acting as a protein-conducting channel at the inner envelope. This Citrus sinensis (Sweet orange) protein is Protein TIC 214.